We begin with the raw amino-acid sequence, 364 residues long: Aminomethyltransferase (364 aa).

This sequence belongs to the GcvT family. As to quaternary structure, the glycine cleavage system is composed of four proteins: P, T, L and H.

The catalysed reaction is N(6)-[(R)-S(8)-aminomethyldihydrolipoyl]-L-lysyl-[protein] + (6S)-5,6,7,8-tetrahydrofolate = N(6)-[(R)-dihydrolipoyl]-L-lysyl-[protein] + (6R)-5,10-methylene-5,6,7,8-tetrahydrofolate + NH4(+). Its function is as follows. The glycine cleavage system catalyzes the degradation of glycine. In Escherichia coli O157:H7, this protein is Aminomethyltransferase.